Reading from the N-terminus, the 336-residue chain is Tryptophan--tRNA ligase (336 aa).

ATP contacts are provided by residues 15-17 and 24-25; these read QPT and GN. The 'HIGH' region motif lies at 16–25; it reads PTSDSLHLGN. D141 lines the L-tryptophan pocket. ATP-binding positions include 153–155, I192, and 201–205; these read GED and KMSKS. The 'KMSKS' region motif lies at 201-205; it reads KMSKS.

Belongs to the class-I aminoacyl-tRNA synthetase family. As to quaternary structure, homodimer.

The protein localises to the cytoplasm. It carries out the reaction tRNA(Trp) + L-tryptophan + ATP = L-tryptophyl-tRNA(Trp) + AMP + diphosphate + H(+). Catalyzes the attachment of tryptophan to tRNA(Trp). This Mycobacterium tuberculosis (strain CDC 1551 / Oshkosh) protein is Tryptophan--tRNA ligase.